Here is a 192-residue protein sequence, read N- to C-terminus: uncharacterized protein (192 aa).

A Nudix hydrolase domain is found at 29-160 (HRQAAVLIPI…PLDIYRRGDS (132 aa)). The Nudix box signature appears at 67-89 (GAVDDTDASVIAAALREAEEEVA). Mg(2+) is bound by residues E83 and E87.

Belongs to the Nudix hydrolase family. PCD1 subfamily. Mn(2+) serves as cofactor. The cofactor is Mg(2+).

Its function is as follows. Probably mediates the hydrolysis of some nucleoside diphosphate derivatives. This is an uncharacterized protein from Escherichia coli (strain SE11).